The chain runs to 85 residues: Putative membrane protein insertion efficiency factor (85 aa).

It belongs to the UPF0161 family.

It is found in the cell membrane. Functionally, could be involved in insertion of integral membrane proteins into the membrane. This chain is Putative membrane protein insertion efficiency factor, found in Buchnera aphidicola subsp. Schizaphis graminum (strain Sg).